The following is a 611-amino-acid chain: Rho-related BTB domain-containing protein 3 (611 aa).

A rho-like region spans residues 1-175; the sequence is MSIHIVALGN…KELGATYLEL (175 aa). BTB domains are found at residues 254–356 and 420–487; these read VDVV…QWEE and ADVV…CPAG. The tract at residues 420–611 is interaction with Rab9; sequence ADVVFEIQGT…HSRKCRCLVM (192 aa).

As to quaternary structure, interacts with RAB9A and RAB9B (at lower level compared to RAB9A-binding). Interacts with M6PRBP1/TIP47. As to expression, ubiquitous. Highly expressed in neural and cardiac tissues, pancreas, placenta and testis.

It is found in the golgi apparatus. Rab9-regulated ATPase required for endosome to Golgi transport. Involved in transport vesicle docking at the Golgi complex, possibly by participating in release M6PRBP1/TIP47 from vesicles to permit their efficient docking and fusion at the Golgi. Specifically binds Rab9, but not other Rab proteins. Has low intrinsic ATPase activity due to autoinhibition, which is relieved by Rab9. The sequence is that of Rho-related BTB domain-containing protein 3 (RHOBTB3) from Homo sapiens (Human).